A 1414-amino-acid chain; its full sequence is DNA-directed RNA polymerase subunit beta' (1414 aa).

The Zn(2+) site is built by cysteine 70, cysteine 72, cysteine 85, and cysteine 88. Residues aspartate 460, aspartate 462, and aspartate 464 each contribute to the Mg(2+) site. Cysteine 814, cysteine 888, cysteine 895, and cysteine 898 together coordinate Zn(2+). Over residues glutamate 1392–alanine 1403 the composition is skewed to low complexity. Positions glutamate 1392 to glutamate 1414 are disordered.

Belongs to the RNA polymerase beta' chain family. The RNAP catalytic core consists of 2 alpha, 1 beta, 1 beta' and 1 omega subunit. When a sigma factor is associated with the core the holoenzyme is formed, which can initiate transcription. The cofactor is Mg(2+). Zn(2+) is required as a cofactor.

The catalysed reaction is RNA(n) + a ribonucleoside 5'-triphosphate = RNA(n+1) + diphosphate. In terms of biological role, DNA-dependent RNA polymerase catalyzes the transcription of DNA into RNA using the four ribonucleoside triphosphates as substrates. The protein is DNA-directed RNA polymerase subunit beta' of Coxiella burnetii (strain RSA 331 / Henzerling II).